We begin with the raw amino-acid sequence, 151 residues long: Ribosome maturation factor RimP (151 aa).

Belongs to the RimP family.

The protein resides in the cytoplasm. Functionally, required for maturation of 30S ribosomal subunits. This Vibrio parahaemolyticus serotype O3:K6 (strain RIMD 2210633) protein is Ribosome maturation factor RimP.